We begin with the raw amino-acid sequence, 398 residues long: 1-deoxy-D-xylulose 5-phosphate reductoisomerase (398 aa).

Residues Thr-13, Gly-14, Ser-15, Ile-16, Arg-40, and Asn-127 each contribute to the NADPH site. Lys-128 is a 1-deoxy-D-xylulose 5-phosphate binding site. Glu-129 serves as a coordination point for NADPH. Asp-153 lines the Mn(2+) pocket. Residues Ser-154, Glu-155, Ser-188, and His-211 each contribute to the 1-deoxy-D-xylulose 5-phosphate site. Mn(2+) is bound at residue Glu-155. An NADPH-binding site is contributed by Gly-217. 1-deoxy-D-xylulose 5-phosphate is bound by residues Ser-224, Asn-229, Lys-230, and Glu-233. Glu-233 contacts Mn(2+).

It belongs to the DXR family. It depends on Mg(2+) as a cofactor. Mn(2+) is required as a cofactor.

It carries out the reaction 2-C-methyl-D-erythritol 4-phosphate + NADP(+) = 1-deoxy-D-xylulose 5-phosphate + NADPH + H(+). It participates in isoprenoid biosynthesis; isopentenyl diphosphate biosynthesis via DXP pathway; isopentenyl diphosphate from 1-deoxy-D-xylulose 5-phosphate: step 1/6. Catalyzes the NADPH-dependent rearrangement and reduction of 1-deoxy-D-xylulose-5-phosphate (DXP) to 2-C-methyl-D-erythritol 4-phosphate (MEP). The polypeptide is 1-deoxy-D-xylulose 5-phosphate reductoisomerase (Cellvibrio japonicus (strain Ueda107) (Pseudomonas fluorescens subsp. cellulosa)).